The sequence spans 434 residues: Trigger factor (434 aa).

Residues 160-245 enclose the PPIase FKBP-type domain; the sequence is GDKAKINFVG…LNEVQAANLP (86 aa).

Belongs to the FKBP-type PPIase family. Tig subfamily.

The protein localises to the cytoplasm. It carries out the reaction [protein]-peptidylproline (omega=180) = [protein]-peptidylproline (omega=0). Its function is as follows. Involved in protein export. Acts as a chaperone by maintaining the newly synthesized protein in an open conformation. Functions as a peptidyl-prolyl cis-trans isomerase. This is Trigger factor from Shewanella woodyi (strain ATCC 51908 / MS32).